The following is a 64-amino-acid chain: Large ribosomal subunit protein uL29 (64 aa).

This sequence belongs to the universal ribosomal protein uL29 family.

The chain is Large ribosomal subunit protein uL29 from Ralstonia pickettii (strain 12J).